A 45-amino-acid chain; its full sequence is Pseudo-hevein (45 aa).

A Chitin-binding type-1 domain is found at 1–43 (EQCGRQAGGKLCPNNLCCSQYGWCGSSDDYCSPSKNCQSNCKG). Disulfide bonds link C3–C18, C12–C24, C17–C31, and C37–C41.

Its function is as follows. N-acetyl-D-glucosamine / N-acetyl-D-neuraminic acid binding lectin. Can inhibit fungal growth. In Hevea brasiliensis (Para rubber tree), this protein is Pseudo-hevein.